Consider the following 344-residue polypeptide: Follistatin (344 aa).

The first 29 residues, M1–A29, serve as a signal peptide directing secretion. Residues G30–G103 form the TB domain. Cystine bridges form between C32–C55, C42–C88, C56–C91, C95–C106, C100–C116, C118–C150, C122–C143, and C132–C164. Residues T94 to V117 enclose the Follistatin-like 1 domain. Kazal-like domains follow at residues N112–K166, N186–K241, and K261–S318. N124 carries N-linked (GlcNAc...) asparagine glycosylation. The region spanning T167–V190 is the Follistatin-like 2 domain. Disulfide bonds link C192-C225, C196-C218, and C207-C239. In terms of domain architecture, Follistatin-like 3 spans S244 to S268. Intrachain disulfides connect C270-C302, C274-C295, and C284-C316. N288 carries an N-linked (GlcNAc...) asparagine glycan. A disordered region spans residues C316 to W344. Acidic residues predominate over residues E321–D333.

As to quaternary structure, interacts with GDF11. Interacts with activin A/INHBA. Interacts with myostatin/MSTN.

The protein resides in the secreted. It localises to the nucleus. Its subcellular location is the nucleolus. Functionally, multifunctional regulatory protein whose primary function is to antagonize members of the transforming growth factor beta (TGF-beta) superfamily including activin, myostatin, GDF11 or bone morphogenetic proteins (BMPs). Mechanistically, binds to these ligands in the extracellular space, blocking their type II receptor-binding site to inhibit downstream signaling. Plays an essential role in muscle fiber formation and growth both by preventing the repressive effects of myostatin and through SMAD3/AKT/mTOR signaling independently of myostatin. Also promotes neural differentiation by antagonizing the action BMP4. Acts as a specific inhibitor of the biosynthesis and secretion of pituitary follicle stimulating hormone (FSH) by sequestering activin A/INHBA. On the other hand, translocates into the nucleus where it down-regulates rRNA synthesis and ribosome biogenesis to maintain cellular energy homeostasis by binding to rDNA. In Bos taurus (Bovine), this protein is Follistatin.